Here is a 217-residue protein sequence, read N- to C-terminus: Small ribosomal subunit protein uS3 (217 aa).

A KH type-2 domain is found at 38-106; that stretch reads IRNFIKKELA…QVHINIIEIK (69 aa).

This sequence belongs to the universal ribosomal protein uS3 family. Part of the 30S ribosomal subunit. Forms a tight complex with proteins S10 and S14.

Functionally, binds the lower part of the 30S subunit head. Binds mRNA in the 70S ribosome, positioning it for translation. This chain is Small ribosomal subunit protein uS3, found in Streptococcus suis (strain 98HAH33).